A 291-amino-acid chain; its full sequence is Arabinogalactan O-methyltransferase 2 (291 aa).

The chain crosses the membrane as a helical span at residues Trp-18–Ile-38.

This sequence belongs to the methyltransferase superfamily.

It localises to the golgi apparatus membrane. Its function is as follows. Involved in the methylation of glucuronic acid of different plant cell wall component, but mainly on side chains of arabinogalactans. The polypeptide is Arabinogalactan O-methyltransferase 2 (Arabidopsis thaliana (Mouse-ear cress)).